We begin with the raw amino-acid sequence, 163 residues long: D-aminoacyl-tRNA deacylase (163 aa).

Positions Gly-141–Pro-142 match the Gly-cisPro motif, important for rejection of L-amino acids motif.

Belongs to the DTD family. In terms of assembly, homodimer.

It localises to the cytoplasm. The enzyme catalyses glycyl-tRNA(Ala) + H2O = tRNA(Ala) + glycine + H(+). The catalysed reaction is a D-aminoacyl-tRNA + H2O = a tRNA + a D-alpha-amino acid + H(+). Its function is as follows. An aminoacyl-tRNA editing enzyme that deacylates mischarged D-aminoacyl-tRNAs. Also deacylates mischarged glycyl-tRNA(Ala), protecting cells against glycine mischarging by AlaRS. Acts via tRNA-based rather than protein-based catalysis; rejects L-amino acids rather than detecting D-amino acids in the active site. By recycling D-aminoacyl-tRNA to D-amino acids and free tRNA molecules, this enzyme counteracts the toxicity associated with the formation of D-aminoacyl-tRNA entities in vivo and helps enforce protein L-homochirality. The chain is D-aminoacyl-tRNA deacylase from Neisseria meningitidis serogroup A / serotype 4A (strain DSM 15465 / Z2491).